The sequence spans 307 residues: N-acetylmuramic acid 6-phosphate etherase (307 aa).

In terms of domain architecture, SIS spans 62–225 (IVAAFQKGGR…TTASMIRIGK (164 aa)). The Proton donor role is filled by glutamate 90. Residue glutamate 121 is part of the active site.

The protein belongs to the GCKR-like family. MurNAc-6-P etherase subfamily. As to quaternary structure, homodimer.

It catalyses the reaction N-acetyl-D-muramate 6-phosphate + H2O = N-acetyl-D-glucosamine 6-phosphate + (R)-lactate. Its pathway is amino-sugar metabolism; 1,6-anhydro-N-acetylmuramate degradation. It participates in amino-sugar metabolism; N-acetylmuramate degradation. The protein operates within cell wall biogenesis; peptidoglycan recycling. Its function is as follows. Specifically catalyzes the cleavage of the D-lactyl ether substituent of MurNAc 6-phosphate, producing GlcNAc 6-phosphate and D-lactate. Together with AnmK, is also required for the utilization of anhydro-N-acetylmuramic acid (anhMurNAc) either imported from the medium or derived from its own cell wall murein, and thus plays a role in cell wall recycling. The protein is N-acetylmuramic acid 6-phosphate etherase of Rhizobium rhizogenes (strain K84 / ATCC BAA-868) (Agrobacterium radiobacter).